The primary structure comprises 128 residues: Large ribosomal subunit protein bL12 (128 aa).

This sequence belongs to the bacterial ribosomal protein bL12 family. In terms of assembly, homodimer. Part of the ribosomal stalk of the 50S ribosomal subunit. Forms a multimeric L10(L12)X complex, where L10 forms an elongated spine to which 2 to 4 L12 dimers bind in a sequential fashion. Binds GTP-bound translation factors.

In terms of biological role, forms part of the ribosomal stalk which helps the ribosome interact with GTP-bound translation factors. Is thus essential for accurate translation. In Aquifex aeolicus (strain VF5), this protein is Large ribosomal subunit protein bL12.